The primary structure comprises 816 residues: Phosphatidylinositol 4-kinase beta (816 aa).

The interval 1–30 (MGDTVVEPAPLKPTSEPTSGPPGNNGGSLL) is disordered. At G2 the chain carries N-acetylglycine. A PIK helical domain is found at 29–242 (LLSVITEGVG…GTKLRKLILS (214 aa)). The interaction with ACBD3 stretch occupies residues 41–67 (SVIDPEVAQKACQEVLEKVKLLHGGVA). Disordered stretches follow at residues 101–120 (EDEM…RRRR) and 248–318 (AHRK…SFSS). S258 bears the Phosphoserine mark. Phosphothreonine is present on T263. Residues S266, S275, S277, S284, and S294 each carry the phosphoserine modification. Composition is skewed to polar residues over residues 278 to 297 (DATA…SNPK) and 306 to 318 (SSST…SFSS). Residue S428 is modified to Phosphoserine. A Phosphothreonine modification is found at T438. Phosphoserine is present on S511. Phosphothreonine is present on residues T517 and T519. The 267-residue stretch at 535-801 (EPWQEKVRRI…MVDGSMRSIT (267 aa)) folds into the PI3K/PI4K catalytic domain. Residues 541-547 (VRRIREG) are G-loop. A catalytic loop region spans residues 668–676 (QVKDRHNGN). The segment at 687 to 711 (HIDFGFILSSSPRNLGFETSAFKLT) is activation loop.

It belongs to the PI3/PI4-kinase family. Type III PI4K subfamily. As to quaternary structure, interacts with ARF1 and ARF3 in the Golgi complex, but not with ARF4, ARF5 or ARF6. Interacts with NCS1/FREQ in a calcium-independent manner. Interacts with CALN1/CABP8 and CALN2/CABP7; in a calcium-dependent manner; this interaction competes with NCS1/FREQ binding. Interacts with ACBD3. Interacts with ARMH3, YWHAB, YWHAE, YWHAG, YWHAH, YWHAQ, YWHAZ and SFN. Interacts with GGA2 (via VHS domain); the interaction is important for PI4KB location at the Golgi apparatus membrane. Interacts with ATG9A. In terms of assembly, (Microbial infection) Interacts with Aichi virus protein 3A. Part of a complex Aichi virus protein 3A/ACBD3/PI4KB that allows the synthesis of PI4P at the viral RNA replication sites. It depends on Mg(2+) as a cofactor. Mn(2+) is required as a cofactor. Widely expressed with highest levels in heart, skeletal muscle, pancreas, testis and ovary. Weakly expressed in liver. Expressed in the innear ear in the epithelium of the spinal organ of corti.

It is found in the endomembrane system. It localises to the mitochondrion outer membrane. The protein resides in the rough endoplasmic reticulum membrane. Its subcellular location is the golgi apparatus. The protein localises to the golgi apparatus membrane. It is found in the cytoplasm. It localises to the perinuclear region. The enzyme catalyses a 1,2-diacyl-sn-glycero-3-phospho-(1D-myo-inositol) + ATP = a 1,2-diacyl-sn-glycero-3-phospho-(1D-myo-inositol 4-phosphate) + ADP + H(+). With respect to regulation, inhibited by wortmannin and adenosine. Increased kinase activity upon interaction with NCS1/FREQ. Its activity is regulated as follows. (Microbial infection) Activated by Aichi virus protein 3A, this activation is sensitized by ACBD3. Functionally, phosphorylates phosphatidylinositol (PI) in the first committed step in the production of the second messenger inositol-1,4,5,-trisphosphate (PIP). May regulate Golgi disintegration/reorganization during mitosis, possibly via its phosphorylation. Involved in Golgi-to-plasma membrane trafficking. May play an important role in the inner ear development. (Microbial infection) Plays an essential role in Aichi virus RNA replication. Recruited by ACBD3 at the viral replication sites. In terms of biological role, (Microbial infection) Required for cellular spike-mediated entry of human coronavirus SARS-CoV. In Homo sapiens (Human), this protein is Phosphatidylinositol 4-kinase beta.